The following is a 401-amino-acid chain: Mitochondrial distribution and morphology protein 12 (401 aa).

One can recognise an SMP-LTD domain in the interval 1–401 (MSIDINWDTL…VYPSFWTFLV (401 aa)). Acidic residues predominate over residues 70–88 (YEEDEDYPDNEDDDDDEAG). Disordered regions lie at residues 70 to 95 (YEEDEDYPDNEDDDDDEAGLDSNPRN) and 190 to 247 (SLTL…EKSP). A compositionally biased stretch (low complexity) spans 195–205 (PQSHPDPSSRP). The span at 209 to 220 (HQHDDERRRSLA) shows a compositional bias: basic and acidic residues.

The protein belongs to the MDM12 family. As to quaternary structure, component of the ER-mitochondria encounter structure (ERMES) or MDM complex, composed of MMM1, MDM10, MDM12 and MDM34. An MMM1 homodimer associates with one molecule of MDM12 on each side in a pairwise head-to-tail manner, and the SMP-LTD domains of MMM1 and MDM12 generate a continuous hydrophobic tunnel for phospholipid trafficking.

The protein localises to the mitochondrion outer membrane. It is found in the endoplasmic reticulum membrane. Functionally, component of the ERMES/MDM complex, which serves as a molecular tether to connect the endoplasmic reticulum (ER) and mitochondria. Components of this complex are involved in the control of mitochondrial shape and protein biogenesis, and function in nonvesicular lipid trafficking between the ER and mitochondria. MDM12 is required for the interaction of the ER-resident membrane protein MMM1 and the outer mitochondrial membrane-resident beta-barrel protein MDM10. The MDM12-MMM1 subcomplex functions in the major beta-barrel assembly pathway that is responsible for biogenesis of all mitochondrial outer membrane beta-barrel proteins, and acts in a late step after the SAM complex. The MDM10-MDM12-MMM1 subcomplex further acts in the TOM40-specific pathway after the action of the MDM12-MMM1 complex. Essential for establishing and maintaining the structure of mitochondria and maintenance of mtDNA nucleoids. This Phaeosphaeria nodorum (strain SN15 / ATCC MYA-4574 / FGSC 10173) (Glume blotch fungus) protein is Mitochondrial distribution and morphology protein 12.